The primary structure comprises 428 residues: Phosphoribosylamine--glycine ligase (428 aa).

In terms of domain architecture, ATP-grasp spans 109-316 (KDFLARHNIP…LVELCLAGTQ (208 aa)). Position 135-196 (135-196 (VRQKGAPIVI…EEFLDGEEAS (62 aa))) interacts with ATP. Glu286 and Asn288 together coordinate Mg(2+).

The protein belongs to the GARS family. Mg(2+) is required as a cofactor. Mn(2+) serves as cofactor.

It catalyses the reaction 5-phospho-beta-D-ribosylamine + glycine + ATP = N(1)-(5-phospho-beta-D-ribosyl)glycinamide + ADP + phosphate + H(+). It participates in purine metabolism; IMP biosynthesis via de novo pathway; N(1)-(5-phospho-D-ribosyl)glycinamide from 5-phospho-alpha-D-ribose 1-diphosphate: step 2/2. The sequence is that of Phosphoribosylamine--glycine ligase from Yersinia pestis.